Here is a 497-residue protein sequence, read N- to C-terminus: Glucose-6-phosphate isomerase (497 aa).

The Proton donor role is filled by Glu350. Catalysis depends on residues His381 and Lys485.

The protein belongs to the GPI family.

The protein resides in the cytoplasm. The catalysed reaction is alpha-D-glucose 6-phosphate = beta-D-fructose 6-phosphate. It functions in the pathway carbohydrate biosynthesis; gluconeogenesis. The protein operates within carbohydrate degradation; glycolysis; D-glyceraldehyde 3-phosphate and glycerone phosphate from D-glucose: step 2/4. In terms of biological role, catalyzes the reversible isomerization of glucose-6-phosphate to fructose-6-phosphate. This Legionella pneumophila protein is Glucose-6-phosphate isomerase.